We begin with the raw amino-acid sequence, 201 residues long: Recombination protein RecR (201 aa).

The C4-type zinc finger occupies 57 to 72; that stretch reads CKSCRTFTEEDECAIC. A Toprim domain is found at 81–176; the sequence is GQLCVVEMPA…KVTRIAHGIP (96 aa).

Belongs to the RecR family.

Its function is as follows. May play a role in DNA repair. It seems to be involved in an RecBC-independent recombinational process of DNA repair. It may act with RecF and RecO. The protein is Recombination protein RecR of Glaesserella parasuis serovar 5 (strain SH0165) (Haemophilus parasuis).